A 1212-amino-acid polypeptide reads, in one-letter code: uncharacterized protein (1212 aa).

The interval 783-802 (TRQDASGGSSSGTKKGEKLQ) is disordered.

This is an uncharacterized protein from Human herpesvirus 6B (strain Z29) (HHV-6 variant B).